Here is a 176-residue protein sequence, read N- to C-terminus: Methenyltetrahydromethanopterin cyclohydrolase (176 aa).

This sequence belongs to the MCH family.

It localises to the cytoplasm. The catalysed reaction is 5,10-methenyl-5,6,7,8-tetrahydromethanopterin + H2O = N(5)-formyl-5,6,7,8-tetrahydromethanopterin + H(+). Its pathway is one-carbon metabolism; formaldehyde degradation; formate from formaldehyde (H(4)MPT route): step 3/5. Catalyzes the hydrolysis of methenyl-H(4)MPT(+) to 5-formyl-H(4)MPT. This is Methenyltetrahydromethanopterin cyclohydrolase (mch) from Methylophilus methylotrophus (Bacterium W3A1).